Reading from the N-terminus, the 439-residue chain is GTPase Der (439 aa).

2 consecutive EngA-type G domains span residues 2–166 (SVVA…PAPA) and 176–351 (TRLA…IEFN). Residues 8–15 (GRPNVGKS), 55–59 (DTGGF), 118–121 (NKVD), 182–189 (GRPNVGKS), 229–233 (DTAGI), and 294–297 (NKWD) contribute to the GTP site. In terms of domain architecture, KH-like spans 352 to 436 (RQVPTGVLNR…PIRLKFKDRN (85 aa)).

The protein belongs to the TRAFAC class TrmE-Era-EngA-EngB-Septin-like GTPase superfamily. EngA (Der) GTPase family. As to quaternary structure, associates with the 50S ribosomal subunit.

Its function is as follows. GTPase that plays an essential role in the late steps of ribosome biogenesis. The polypeptide is GTPase Der (Syntrophotalea carbinolica (strain DSM 2380 / NBRC 103641 / GraBd1) (Pelobacter carbinolicus)).